The chain runs to 467 residues: NALCN channel auxiliary factor 1 (467 aa).

Residues 40 to 60 (LSLASLLFFTVLLSDHLWFCA) form a helical membrane-spanning segment. A disordered region spans residues 121-161 (MGESSPAAQAHRLLSASSSPTLPPSPGGGGGSKGNRGKNNR). N-linked (GlcNAc...) asparagine glycans are attached at residues Asn160, Asn226, and Asn254. 7 disulfides stabilise this stretch: Cys200-Cys270, Cys235-Cys322, Cys255-Cys270, Cys313-Cys350, Cys333-Cys386, Cys339-Cys385, and Cys343-Cys370. Positions 390 to 408 (SEEQTAPRPKGTVDRRDSC) are enriched in basic and acidic residues. The disordered stretch occupies residues 390–409 (SEEQTAPRPKGTVDRRDSCP). The helical transmembrane segment at 426 to 446 (LKLCVLVLILLHTVLTASAAQ) threads the bilayer. An N-linked (GlcNAc...) asparagine glycan is attached at Asn462.

The protein belongs to the NALF family. As to quaternary structure, component of the NALCN channel complex. NALCN complex consists of NALCN and auxiliary subunits, UNC79, UNC80 and NACL1. These auxiliary subunits are essential for the NALCN channel function.

It localises to the cell membrane. Its function is as follows. Auxillary component of the NALCN sodium channel complex, a channel that regulates the resting membrane potential and controls neuronal excitability. This Mus musculus (Mouse) protein is NALCN channel auxiliary factor 1.